Here is a 400-residue protein sequence, read N- to C-terminus: Phosphoglycerate kinase (400 aa).

Residues 23-25 (DLN), arginine 38, 61-64 (HFGR), arginine 120, and arginine 153 contribute to the substrate site. ATP-binding positions include lysine 203, glutamate 325, and 355–358 (GGDT).

It belongs to the phosphoglycerate kinase family. In terms of assembly, monomer.

The protein localises to the cytoplasm. The enzyme catalyses (2R)-3-phosphoglycerate + ATP = (2R)-3-phospho-glyceroyl phosphate + ADP. It participates in carbohydrate degradation; glycolysis; pyruvate from D-glyceraldehyde 3-phosphate: step 2/5. The protein is Phosphoglycerate kinase of Methylorubrum extorquens (strain CM4 / NCIMB 13688) (Methylobacterium extorquens).